A 96-amino-acid polypeptide reads, in one-letter code: Co-chaperonin GroES (96 aa).

The protein belongs to the GroES chaperonin family. As to quaternary structure, heptamer of 7 subunits arranged in a ring. Interacts with the chaperonin GroEL.

It localises to the cytoplasm. Functionally, together with the chaperonin GroEL, plays an essential role in assisting protein folding. The GroEL-GroES system forms a nano-cage that allows encapsulation of the non-native substrate proteins and provides a physical environment optimized to promote and accelerate protein folding. GroES binds to the apical surface of the GroEL ring, thereby capping the opening of the GroEL channel. This chain is Co-chaperonin GroES, found in Caulobacter vibrioides (strain ATCC 19089 / CIP 103742 / CB 15) (Caulobacter crescentus).